The sequence spans 691 residues: MARSPVEPPASQPAKRAAWLRAELERANYAYYVLDQPDLPDAEYDRLFVELQRIEAEHPDLVTPDSPTQRVGGEAASGFTPVVHDKPMLSLNNGFADEDVIAFDKRVADGLDKATDLAGTVTEPVEYACELKFDGLAISLRYENGRFVQASTRGDGTTGEDVTENIRTIRAIPLTLKGKRIPRMLDVRGEVLMFKRDFARLNERQRAAGQREFANPRNAAAGSLRQLDSKITASRPLSFFAYGIGVLDGADMPDTHSGLLDWYETLGLPVNRERAVVRGAAGLLAFFHSVGERRESLPYDIDGVVYKVNRRDEQDRLGFVSRAPRFALAHKFPAQEALTKLTAIDVQVGRTGAITPVARLEPVFVGGATVTNATLHNEDEVRRKDIRIGDTVIVRRAGDVIPEVVSAVLDRRPADAQEFVMPTECPECGSRIERLPDEAIARCTGGLFCPAQRKQALWHFAQRRALDIDGLGEKIIDQLVEQNLVRTPADLFNLGFSTLVALDRFAEKSARNLIDSLEKAKHTTLARFIYALGIRHVGESTAKDLAKHFGSLDPIMDAPIDALLEVNDVGPIVAESIHQFFAEEHNRTVIEQLRARGKVTWPEGPPAPRAPQGVLAGKTVVLTGTLPTLTREAAKEMLEAAGAKVAGSVSKKTDYVVAGADAGSKLAKAEELGIPVLDEAGMHTLLEGHAR.

NAD(+) contacts are provided by residues 41–45 (DAEYD), 90–91 (SL), and E130. Residue K132 is the N6-AMP-lysine intermediate of the active site. NAD(+) is bound by residues R153, E190, K307, and K331. 4 residues coordinate Zn(2+): C425, C428, C443, and C449. The BRCT domain maps to 610-691 (APQGVLAGKT…MHTLLEGHAR (82 aa)).

This sequence belongs to the NAD-dependent DNA ligase family. LigA subfamily. Mg(2+) is required as a cofactor. It depends on Mn(2+) as a cofactor.

The catalysed reaction is NAD(+) + (deoxyribonucleotide)n-3'-hydroxyl + 5'-phospho-(deoxyribonucleotide)m = (deoxyribonucleotide)n+m + AMP + beta-nicotinamide D-nucleotide.. In terms of biological role, DNA ligase that catalyzes the formation of phosphodiester linkages between 5'-phosphoryl and 3'-hydroxyl groups in double-stranded DNA using NAD as a coenzyme and as the energy source for the reaction. It is essential for DNA replication and repair of damaged DNA. This is DNA ligase from Burkholderia mallei (strain NCTC 10247).